A 114-amino-acid polypeptide reads, in one-letter code: Probable non-functional T cell receptor beta variable 5-7 (114 aa).

Residues 1–21 form the signal peptide; the sequence is MGPGLLCWVLLCPLGEGPVDA. Positions 22–114 constitute an Ig-like domain; the sequence is GVTQSPTHLI…SALYLCASSL (93 aa). Cysteines 42 and 110 form a disulfide. Asn-90 is a glycosylation site (N-linked (GlcNAc...) asparagine).

In terms of assembly, alpha-beta TR is a heterodimer composed of an alpha and beta chain; disulfide-linked. The alpha-beta TR is associated with the transmembrane signaling CD3 coreceptor proteins to form the TR-CD3 (TcR or TCR). The assembly of alpha-beta TR heterodimers with CD3 occurs in the endoplasmic reticulum where a single alpha-beta TR heterodimer associates with one CD3D-CD3E heterodimer, one CD3G-CD3E heterodimer and one CD247 homodimer forming a stable octameric structure. CD3D-CD3E and CD3G-CD3E heterodimers preferentially associate with TR alpha and TR beta chains, respectively. The association of the CD247 homodimer is the last step of TcR assembly in the endoplasmic reticulum and is required for transport to the cell surface.

The protein resides in the cell membrane. Functionally, probable non-functional open reading frame (ORF) of V region of the variable domain of T cell receptor (TR) beta chain. Non-functional ORF generally cannot participate in the synthesis of a productive T cell receptor (TR) chain due to altered V-(D)-J or switch recombination and/or splicing site (at mRNA level) and/or conserved amino acid change (protein level). Alpha-beta T cell receptors are antigen specific receptors which are essential to the immune response and are present on the cell surface of T lymphocytes. Recognize peptide-major histocompatibility (MH) (pMH) complexes that are displayed by antigen presenting cells (APC), a prerequisite for efficient T cell adaptive immunity against pathogens. Binding of alpha-beta TR to pMH complex initiates TR-CD3 clustering on the cell surface and intracellular activation of LCK that phosphorylates the ITAM motifs of CD3G, CD3D, CD3E and CD247 enabling the recruitment of ZAP70. In turn ZAP70 phosphorylates LAT, which recruits numerous signaling molecules to form the LAT signalosome. The LAT signalosome propagates signal branching to three major signaling pathways, the calcium, the mitogen-activated protein kinase (MAPK) kinase and the nuclear factor NF-kappa-B (NF-kB) pathways, leading to the mobilization of transcription factors that are critical for gene expression and essential for T cell growth and differentiation. The T cell repertoire is generated in the thymus, by V-(D)-J rearrangement. This repertoire is then shaped by intrathymic selection events to generate a peripheral T cell pool of self-MH restricted, non-autoaggressive T cells. Post-thymic interaction of alpha-beta TR with the pMH complexes shapes TR structural and functional avidity. The chain is Probable non-functional T cell receptor beta variable 5-7 from Homo sapiens (Human).